We begin with the raw amino-acid sequence, 1499 residues long: Autophagy-related protein 2 (1499 aa).

Residues 211-221 (EQSVPSYGSSS) are compositionally biased toward polar residues. A disordered region spans residues 211-237 (EQSVPSYGSSSSDKEDDNTSDSEDPLS). Over residues 224 to 234 (KEDDNTSDSED) the composition is skewed to acidic residues.

It belongs to the ATG2 family.

Its subcellular location is the preautophagosomal structure membrane. The protein localises to the endoplasmic reticulum membrane. The catalysed reaction is a 1,2-diacyl-sn-glycero-3-phosphocholine(in) = a 1,2-diacyl-sn-glycero-3-phosphocholine(out). It catalyses the reaction a 1,2-diacyl-sn-glycero-3-phospho-L-serine(in) = a 1,2-diacyl-sn-glycero-3-phospho-L-serine(out). The enzyme catalyses a 1,2-diacyl-sn-glycero-3-phosphoethanolamine(in) = a 1,2-diacyl-sn-glycero-3-phosphoethanolamine(out). Its function is as follows. Lipid transfer protein required for autophagosome completion and peroxisome degradation. Tethers the edge of the isolation membrane (IM) to the endoplasmic reticulum (ER) and mediates direct lipid transfer from ER to IM for IM expansion. ATG2 binds to the ER exit site (ERES), which is the membrane source for autophagosome formation, using basic residues in its N-terminal region (NR) and to the expanding edge of the IM through its C-terminal region. The latter binding is assisted by an ATG18-PtdIns3P interaction. ATG2 then extracts phospholipids from the membrane source using its NR and transfers them to ATG9 to the IM through its predicted beta-sheet-rich structure for membrane expansion. The polypeptide is Autophagy-related protein 2 (Kluyveromyces marxianus (strain DMKU3-1042 / BCC 29191 / NBRC 104275) (Yeast)).